Reading from the N-terminus, the 69-residue chain is Large ribosomal subunit protein uL29 (69 aa).

Belongs to the universal ribosomal protein uL29 family.

The protein is Large ribosomal subunit protein uL29 of Clostridium perfringens (strain ATCC 13124 / DSM 756 / JCM 1290 / NCIMB 6125 / NCTC 8237 / Type A).